Reading from the N-terminus, the 132-residue chain is MSKIDSIIEMIEGLNVLELVELKKKMEEKWGVTAAAPVMAMGAAMPVAAAGDGAAAAAPVEEKTEFDVILKEAGPNKIQVIKVVRELTSLGLKEAKDLVEGAPKPVREGVSKEEAEAAKAKLTEAGAVVEIK.

The protein belongs to the bacterial ribosomal protein bL12 family. In terms of assembly, homodimer. Part of the ribosomal stalk of the 50S ribosomal subunit. Forms a multimeric L10(L12)X complex, where L10 forms an elongated spine to which 2 to 4 L12 dimers bind in a sequential fashion. Binds GTP-bound translation factors.

Functionally, forms part of the ribosomal stalk which helps the ribosome interact with GTP-bound translation factors. Is thus essential for accurate translation. The protein is Large ribosomal subunit protein bL12 of Chloroflexus aurantiacus (strain ATCC 29366 / DSM 635 / J-10-fl).